A 426-amino-acid chain; its full sequence is Metacaspase-1B (426 aa).

Gly residues predominate over residues 1–14 (MSGYPGAGYNGGGY). A disordered region spans residues 1–111 (MSGYPGAGYN…QAPPPPPQAP (111 aa)). Residues 21-68 (QYGGYYPPQPAYNAYQQPPPQQQQYMVYHQPSPGPQQHQHWNPQQQTP) show a composition bias toward low complexity. Residues His-217 and Cys-273 contribute to the active site.

Belongs to the peptidase C14B family.

Functionally, involved in cell death (apoptosis). This chain is Metacaspase-1B (casB), found in Neurospora crassa (strain ATCC 24698 / 74-OR23-1A / CBS 708.71 / DSM 1257 / FGSC 987).